Consider the following 382-residue polypeptide: Sphingoid long-chain base transporter RSB1 (382 aa).

Residues 1 to 34 are Extracellular-facing; the sequence is MSNATNNTLGSLLPQLEAAANSNSLYGGMVPNLR. Asn-3 and Asn-6 each carry an N-linked (GlcNAc...) asparagine glycan. Residues 35-55 form a helical membrane-spanning segment; sequence FNITMIVIWGILLTIHVVQLL. At 56–57 the chain is on the cytoplasmic side; it reads MR. The helical transmembrane segment at 58–78 threads the bilayer; that stretch reads QYWFSIAFICTGILEVLGFIG. At 79–90 the chain is on the extracellular side; the sequence is RTWSHSNVADMD. Residues 91 to 111 traverse the membrane as a helical segment; sequence AFLLNMICLTIAPVFTMGGIY. Topologically, residues 112–135 are cytoplasmic; that stretch reads YQLAKLIEVYGHRFSLLPSPMAYS. Residues 136 to 156 form a helical membrane-spanning segment; it reads FIFICSDIVSLVVQAVGGGLC. Topologically, residues 157-171 are extracellular; the sequence is GVAVTDGTSTTTGNH. Residues 172 to 192 traverse the membrane as a helical segment; it reads VFIAGLAIQVASMAIFLMLWF. At 193–241 the chain is on the cytoplasmic side; the sequence is HFLFRIYISVRWEHINSRPISLSLLKISQTEVDYLYREKFHFLRLEPKR. The chain crosses the membrane as a helical span at residues 242–262; sequence WVFHYFNLAITVAVLTIFTRC. At 263-281 the chain is on the extracellular side; it reads CYRLAELVVGWDGYLITHE. Residues 282 to 302 form a helical membrane-spanning segment; it reads WYFIILDALMMAIATVTLTIF. Topologically, residues 303-382 are cytoplasmic; that stretch reads HPGFAFKGKS…LFSSKKKAKL (80 aa).

It belongs to the lipid-translocating exporter (LTE) (TC 9.A.26.1) family.

Its subcellular location is the cell membrane. Its function is as follows. Catalyzes the ATP-dependent translocation of sphingoid long-chain bases (LCBs) from the cytoplasmic site toward the extracytoplasmic side of the membrane (flip-flop). Involved in the establishment of the functional lipid asymmetry of the plasma membrane. Regulates intracellular levels of LCBs, sphingolipid precursors that are growth inhibitory at increased levels. The protein is Sphingoid long-chain base transporter RSB1 (RSB1) of Saccharomyces cerevisiae (strain JAY291) (Baker's yeast).